A 176-amino-acid chain; its full sequence is Cytochrome b (176 aa).

The next 3 membrane-spanning stretches (helical) occupy residues 33–53 (FGSL…FLAM), 77–98 (WLLR…YLHI), and 113–133 (WNVG…GYVL). The heme b site is built by His-83 and His-97.

Belongs to the cytochrome b family. The cytochrome bc1 complex contains 11 subunits: 3 respiratory subunits (MT-CYB, CYC1 and UQCRFS1), 2 core proteins (UQCRC1 and UQCRC2) and 6 low-molecular weight proteins (UQCRH/QCR6, UQCRB/QCR7, UQCRQ/QCR8, UQCR10/QCR9, UQCR11/QCR10 and a cleavage product of UQCRFS1). This cytochrome bc1 complex then forms a dimer. Heme b serves as cofactor.

The protein resides in the mitochondrion inner membrane. In terms of biological role, component of the ubiquinol-cytochrome c reductase complex (complex III or cytochrome b-c1 complex) that is part of the mitochondrial respiratory chain. The b-c1 complex mediates electron transfer from ubiquinol to cytochrome c. Contributes to the generation of a proton gradient across the mitochondrial membrane that is then used for ATP synthesis. This chain is Cytochrome b (MT-CYB), found in Eumops perotis (Western bonneted bat).